The sequence spans 275 residues: Beta-lactamase OXA-15 (275 aa).

The signal sequence occupies residues methionine 1–alanine 21. The active-site Acyl-ester intermediate is the serine 72. Lysine 75 is subject to N6-carboxylysine. Residue lysine 210–glycine 212 coordinates substrate.

Belongs to the class-D beta-lactamase family.

The catalysed reaction is a beta-lactam + H2O = a substituted beta-amino acid. Functionally, hydrolyzes oxacillin, first-generation cephalosporins and ceftazidime. Does not hydrolyze cefotaxime or carbapenems. This Pseudomonas aeruginosa protein is Beta-lactamase OXA-15 (bla).